The sequence spans 411 residues: 2,3-bisphosphoglycerate-independent phosphoglycerate mutase (411 aa).

This sequence belongs to the BPG-independent phosphoglycerate mutase family. A-PGAM subfamily. Homotetramer. The cofactor is Mg(2+).

It catalyses the reaction (2R)-2-phosphoglycerate = (2R)-3-phosphoglycerate. It functions in the pathway carbohydrate degradation; glycolysis; pyruvate from D-glyceraldehyde 3-phosphate: step 3/5. With respect to regulation, inhibited to approximately 20% by EDTA. In terms of biological role, catalyzes the interconversion of 2-phosphoglycerate and 3-phosphoglycerate. In Pyrococcus furiosus (strain ATCC 43587 / DSM 3638 / JCM 8422 / Vc1), this protein is 2,3-bisphosphoglycerate-independent phosphoglycerate mutase (apgM).